The following is a 256-amino-acid chain: Ubiquinone/menaquinone biosynthesis C-methyltransferase UbiE (256 aa).

Residues T79, D100, and 128-129 each bind S-adenosyl-L-methionine; that span reads DA.

Belongs to the class I-like SAM-binding methyltransferase superfamily. MenG/UbiE family.

It carries out the reaction a 2-demethylmenaquinol + S-adenosyl-L-methionine = a menaquinol + S-adenosyl-L-homocysteine + H(+). The catalysed reaction is a 2-methoxy-6-(all-trans-polyprenyl)benzene-1,4-diol + S-adenosyl-L-methionine = a 5-methoxy-2-methyl-3-(all-trans-polyprenyl)benzene-1,4-diol + S-adenosyl-L-homocysteine + H(+). It participates in quinol/quinone metabolism; menaquinone biosynthesis; menaquinol from 1,4-dihydroxy-2-naphthoate: step 2/2. It functions in the pathway cofactor biosynthesis; ubiquinone biosynthesis. Methyltransferase required for the conversion of demethylmenaquinol (DMKH2) to menaquinol (MKH2) and the conversion of 2-polyprenyl-6-methoxy-1,4-benzoquinol (DDMQH2) to 2-polyprenyl-3-methyl-6-methoxy-1,4-benzoquinol (DMQH2). The sequence is that of Ubiquinone/menaquinone biosynthesis C-methyltransferase UbiE from Pseudomonas paraeruginosa (strain DSM 24068 / PA7) (Pseudomonas aeruginosa (strain PA7)).